The chain runs to 363 residues: Flagellar P-ring protein (363 aa).

The signal sequence occupies residues 1 to 18 (MWKKVLIAIVFITSFSFA).

Belongs to the FlgI family. As to quaternary structure, the basal body constitutes a major portion of the flagellar organelle and consists of four rings (L,P,S, and M) mounted on a central rod.

The protein resides in the periplasm. The protein localises to the bacterial flagellum basal body. Its function is as follows. Assembles around the rod to form the L-ring and probably protects the motor/basal body from shearing forces during rotation. This chain is Flagellar P-ring protein, found in Sulfurihydrogenibium sp. (strain YO3AOP1).